Consider the following 218-residue polypeptide: Thiopurine S-methyltransferase (218 aa).

Residues tryptophan 10, leucine 45, glutamate 66, and arginine 123 each contribute to the S-adenosyl-L-methionine site.

The protein belongs to the class I-like SAM-binding methyltransferase superfamily. TPMT family.

It localises to the cytoplasm. It carries out the reaction S-adenosyl-L-methionine + a thiopurine = S-adenosyl-L-homocysteine + a thiopurine S-methylether.. The protein is Thiopurine S-methyltransferase of Xanthomonas euvesicatoria pv. vesicatoria (strain 85-10) (Xanthomonas campestris pv. vesicatoria).